The sequence spans 288 residues: ATP phosphoribosyltransferase (288 aa).

The protein belongs to the ATP phosphoribosyltransferase family. Long subfamily. Requires Mg(2+) as cofactor.

The protein resides in the cytoplasm. The catalysed reaction is 1-(5-phospho-beta-D-ribosyl)-ATP + diphosphate = 5-phospho-alpha-D-ribose 1-diphosphate + ATP. Its pathway is amino-acid biosynthesis; L-histidine biosynthesis; L-histidine from 5-phospho-alpha-D-ribose 1-diphosphate: step 1/9. With respect to regulation, feedback inhibited by histidine. Catalyzes the condensation of ATP and 5-phosphoribose 1-diphosphate to form N'-(5'-phosphoribosyl)-ATP (PR-ATP). Has a crucial role in the pathway because the rate of histidine biosynthesis seems to be controlled primarily by regulation of HisG enzymatic activity. This chain is ATP phosphoribosyltransferase, found in Methanococcus maripaludis (strain C5 / ATCC BAA-1333).